The sequence spans 239 residues: Major centromere autoantigen B (239 aa).

Residues 28 to 185 (AGFGGGPNAT…DDEVPVPSFG (158 aa)) are disordered. Thr-37 and Thr-39 each carry phosphothreonine. Acidic residues-rich tracts occupy residues 46-117 (GEEE…EAED) and 148-179 (GEED…DDEV). Positions 176-239 (DDEVPVPSFG…AGARGLGHQS (64 aa)) are homodimerization.

In terms of assembly, antiparallel homodimer. Interacts with CENPT. Identified in a centromere complex containing histones H2A, H2B and H4, and at least CENPA, CENPB, CENPC, CENPT, CENPN, HJURP, SUPT16H, SSRP1 and RSF1. Poly-ADP-ribosylated by PARP1. Post-translationally, N-terminally methylated by METTL11A/NTM1. Alpha-N-methylation is stimulated in response extracellular stimuli, including increased cell density and heat shock, and seems to facilitate binding to CENP-B boxes. Chromatin-bound CENP-B is primarily trimethylated.

It localises to the nucleus. The protein localises to the chromosome. The protein resides in the centromere. Functionally, interacts with centromeric heterochromatin in chromosomes and binds to a specific 17 bp subset of alphoid satellite DNA, called the CENP-B box. May organize arrays of centromere satellite DNA into a higher-order structure which then directs centromere formation and kinetochore assembly in mammalian chromosomes. The protein is Major centromere autoantigen B (CENPB) of Ovis aries (Sheep).